A 377-amino-acid polypeptide reads, in one-letter code: Chaperone protein DnaJ (377 aa).

The region spanning 4–69 (DYYEALGVER…QKRAAYDRFG (66 aa)) is the J domain. The segment at 135-213 (GKTAQIRVPT…CHGQGRVTQE (79 aa)) adopts a CR-type zinc-finger fold. Residues Cys-148, Cys-151, Cys-165, Cys-168, Cys-187, Cys-190, Cys-201, and Cys-204 each contribute to the Zn(2+) site. 4 CXXCXGXG motif repeats span residues 148-155 (CDECSGSG), 165-172 (CTMCSGSG), 187-194 (CPTCNGRG), and 201-208 (CGKCHGQG).

Belongs to the DnaJ family. As to quaternary structure, homodimer. Requires Zn(2+) as cofactor.

The protein resides in the cytoplasm. Its function is as follows. Participates actively in the response to hyperosmotic and heat shock by preventing the aggregation of stress-denatured proteins and by disaggregating proteins, also in an autonomous, DnaK-independent fashion. Unfolded proteins bind initially to DnaJ; upon interaction with the DnaJ-bound protein, DnaK hydrolyzes its bound ATP, resulting in the formation of a stable complex. GrpE releases ADP from DnaK; ATP binding to DnaK triggers the release of the substrate protein, thus completing the reaction cycle. Several rounds of ATP-dependent interactions between DnaJ, DnaK and GrpE are required for fully efficient folding. Also involved, together with DnaK and GrpE, in the DNA replication of plasmids through activation of initiation proteins. In Brucella anthropi (strain ATCC 49188 / DSM 6882 / CCUG 24695 / JCM 21032 / LMG 3331 / NBRC 15819 / NCTC 12168 / Alc 37) (Ochrobactrum anthropi), this protein is Chaperone protein DnaJ.